The primary structure comprises 881 residues: MAMKRVVFLLLLVAASALVKSSRGGGGGEEKLGKFYGWRRHLSSGPAASSLVLSGDLVDKIWSVCLQDIVSPEDTFGFGESFAWDELSSHSTEDELKATLFMELMALLPPEKSSFTYDCIRANCFSLGVPQIFSVALSNYLESQKSLVGSNFYPRRRLVDKLIGDAPSMAPAFAPSMSSGGEVHSPLSVAEAPLTPSNSLNMEPPSPYYPSKSAHKHQGVAPPVSPSEEYHDYMKVVLIAVLPTAALSFLAAFLCFYCCGCNKSKVSVGEQRDDHPLLHLQFSNLPGSSPDVHVPASPLHKDDHGVRPSNAGVSMSKCFPCCFKTSSDATTPTLVTGGTQENNATSDAPKLMPPPPPPPPPPPPPPPPPPPRPPPPPPPIKKGAPPPAPPKATMARFPKLSPTESSRSEESSASELASESSETEVNAPRAKLRPFYWDKVLANPDQSMAWHDIKFGSFHVNEEMIEELFGYGAGNQNNVKDKEISIADPSPQHVSLLDVKKSCNLAVVFKAMNVRAEEIHDALVEGNELPRLLLETILRMKPTDEEEQKLRLYNGDCSQLGLAEQVMKALIDIPFAFERIRALLFMSSLQEDASSLRESFLQLEAACGELKHRLFLKLLEAILKTGNRLNDGTFRGGANAFKLDTLLKLSDVKGADGKTTLLHFVVQEIIRSEGVREARLAMENGRSPPFPSTSDDNSNESLQEDGNYYSNLGLKIVSGLSNELDNVKRVAALDADALSTSVANLRHELLRAKEFLNSDMASLEENSGFHRSLESFIEHAETETNFLLKEDKRLRMLVKRTIRYFHGNDEKDDGFRLFVIVRDFLVMLDKACKEVGASQKKATNKSQANGNSNNPSSQSNPQEQQFPAVLDHHFDSSDSND.

The N-terminal stretch at 1–24 (MAMKRVVFLLLLVAASALVKSSRG) is a signal peptide. Positions 194 to 223 (LTPSNSLNMEPPSPYYPSKSAHKHQGVAPP) are disordered. Residues 236–256 (VVLIAVLPTAALSFLAAFLCF) form a helical membrane-spanning segment. Over residues 333–346 (TLVTGGTQENNATS) the composition is skewed to polar residues. Disordered stretches follow at residues 333-427 (TLVT…EVNA), 683-703 (ENGR…ESLQ), and 837-881 (ASQK…DSND). Residues 351-390 (LMPPPPPPPPPPPPPPPPPPPRPPPPPPPIKKGAPPPAPP) are compositionally biased toward pro residues. Positions 400–424 (LSPTESSRSEESSASELASESSETE) are enriched in low complexity. The region spanning 422–854 (ETEVNAPRAK…KSQANGNSNN (433 aa)) is the FH2 domain. Positions 692–701 (STSDDNSNES) are enriched in polar residues. Positions 846–865 (SQANGNSNNPSSQSNPQEQQ) are enriched in low complexity. Positions 870–881 (LDHHFDSSDSND) are enriched in basic and acidic residues.

This sequence belongs to the formin-like family. Class-I subfamily.

It localises to the membrane. This is Formin-like protein 10 (FH10) from Oryza sativa subsp. japonica (Rice).